Here is a 231-residue protein sequence, read N- to C-terminus: 5'-methylthioadenosine/S-adenosylhomocysteine nucleosidase (231 aa).

Catalysis depends on glutamate 12, which acts as the Proton acceptor. Substrate is bound by residues glycine 78, isoleucine 153, and 174–175; that span reads ME. Aspartate 198 functions as the Proton donor in the catalytic mechanism.

This sequence belongs to the PNP/UDP phosphorylase family. MtnN subfamily.

The enzyme catalyses S-adenosyl-L-homocysteine + H2O = S-(5-deoxy-D-ribos-5-yl)-L-homocysteine + adenine. It catalyses the reaction S-methyl-5'-thioadenosine + H2O = 5-(methylsulfanyl)-D-ribose + adenine. The catalysed reaction is 5'-deoxyadenosine + H2O = 5-deoxy-D-ribose + adenine. The protein operates within amino-acid biosynthesis; L-methionine biosynthesis via salvage pathway; S-methyl-5-thio-alpha-D-ribose 1-phosphate from S-methyl-5'-thioadenosine (hydrolase route): step 1/2. Its function is as follows. Catalyzes the irreversible cleavage of the glycosidic bond in both 5'-methylthioadenosine (MTA) and S-adenosylhomocysteine (SAH/AdoHcy) to adenine and the corresponding thioribose, 5'-methylthioribose and S-ribosylhomocysteine, respectively. Also cleaves 5'-deoxyadenosine, a toxic by-product of radical S-adenosylmethionine (SAM) enzymes, into 5-deoxyribose and adenine. This Maridesulfovibrio salexigens (strain ATCC 14822 / DSM 2638 / NCIMB 8403 / VKM B-1763) (Desulfovibrio salexigens) protein is 5'-methylthioadenosine/S-adenosylhomocysteine nucleosidase.